The primary structure comprises 318 residues: Transcriptional regulator NovG (318 aa).

Positions 146-156 (VASLRSSSTAG) are enriched in polar residues. The interval 146–176 (VASLRSSSTAGTVGRRTGQDGRSRPNDGTDG) is disordered. The span at 162–176 (TGQDGRSRPNDGTDG) shows a compositional bias: basic and acidic residues.

The protein belongs to the ParB family.

Transcription regulator that specifically activates expression of genes involved in the novobiocin biosynthesis pathway. Binds 5'-GTTCRACTG(N)(11)CRGTYGAAC-3' DNA sequence. This Streptomyces niveus (Streptomyces spheroides) protein is Transcriptional regulator NovG (novG).